A 111-amino-acid polypeptide reads, in one-letter code: uncharacterized protein (111 aa).

It is found in the cytoplasm. Its subcellular location is the nucleus. This is an uncharacterized protein from Schizosaccharomyces pombe (strain 972 / ATCC 24843) (Fission yeast).